A 162-amino-acid chain; its full sequence is Retinoic acid receptor responder protein 2 (162 aa).

The first 20 residues, methionine 1–threonine 20, serve as a signal peptide directing secretion. Intrachain disulfides connect cysteine 79–cysteine 89, cysteine 100–cysteine 119, and cysteine 103–cysteine 134. The propeptide occupies arginine 157–lysine 162.

In terms of processing, secreted in an inactive precursor form, prochemerin, which is proteolytically processed by a variety of extracellular proteases to generate forms with differing levels of bioactivity. For example, the removal of six amino acids results in chemerin-156, which exhibits the highest activity, while removal of seven amino acids results in chemerin-155 which has slightly less activity. Some proteases are able to cleave at more than one site and chemerin forms may be sequentially processed by different enzymes to modulate activity levels. The coordinated expression and activity of chemerin-modifying enzymes is essential for regulating its bioactivation, inactivation and, consequently, biological function. Cathepsin G cleaves seven C-terminal amino acids from prochemerin (chemerin-155), elastase is able to cleave six (chemerin-156), eight (chemerin-154) or eleven (chemerin-151), plasmin cleaves five amino acids (chemerin-157), and tryptase cleaves five (chemerin-157) or eight (chemerin-154). Multiple cleavages might be required to fully activate chemerin, with an initial tryptase cleavage resulting in chemerin with low activity (chemerin-157), and a second cleavage by carboxypeptidase N or B producing highly active chemerin (chemerin-156). As to expression, expressed in the differentiated adipocytes (at protein level). Abundantly expressed in the liver, adipose tissue including visceral, epididymal, and brown adipose tissue.

Its subcellular location is the secreted. In terms of biological role, adipocyte-secreted protein (adipokine) that regulates adipogenesis, metabolism and inflammation through activation of the chemokine-like receptor 1 (CMKLR1). Also acts as a ligand for CMKLR2. Can also bind to C-C chemokine receptor-like 2 (CCRL2), but with a lower affinity than it does to CMKLR1 or CMKLR2. Positively regulates adipocyte differentiation, modulates the expression of adipocyte genes involved in lipid and glucose metabolism and might play a role in angiogenesis, a process essential for the expansion of white adipose tissue. Also acts as a pro-inflammatory adipokine, causing an increase in secretion of pro-inflammatory and prodiabetic adipokines, which further impair adipose tissue metabolic function and have negative systemic effects including impaired insulin sensitivity, altered glucose and lipid metabolism, and a decrease in vascular function in other tissues. Can have both pro- and anti-inflammatory properties depending on the modality of enzymatic cleavage by different classes of proteases. Acts as a chemotactic factor for leukocyte populations expressing CMKLR1, particularly immature plasmacytoid dendritic cells, but also immature myeloid DCs, macrophages and natural killer cells. Exerts an anti-inflammatory role by preventing TNF/TNFA-induced VCAM1 expression and monocytes adhesion in vascular endothelial cells. The effect is mediated via inhibiting activation of NF-kappa-B and CRK/p38 through stimulation of AKT1/NOS3 signaling and nitric oxide production. Exhibits an antimicrobial function in the skin. In Mus musculus (Mouse), this protein is Retinoic acid receptor responder protein 2 (Rarres2).